The primary structure comprises 315 residues: Ester hydrolase C11orf54 (315 aa).

Residues His266, His268, and His278 each coordinate Zn(2+).

As to quaternary structure, monomer. Requires Zn(2+) as cofactor.

Its subcellular location is the nucleus. It is found in the cytoplasm. In terms of biological role, exhibits ester hydrolase activity on the substrate p-nitrophenyl acetate, in vitro. Regulates DNA damage and repair by regulating HIF1A degradation via chaperone-mediated autophagy (CMA). Functionally, probably non-functional. This Homo sapiens (Human) protein is Ester hydrolase C11orf54 (C11orf54).